A 487-amino-acid polypeptide reads, in one-letter code: MKYKDLREFLTLLEGQGELVRIKQEIDPYLEMAEISDRTLRKGGPAILFENPKGYRMPVLCNLFGTPKRVALGMGQEDTHALRELGKLLAFLKEPEPPKGFKELIGQLPQWKQVLNMPSKVLGKADCQQVVLSGDEVDLHKLPIMHCHQGDVAPLVTWGLTITQGPYKKRQNLGIYRQQLIGKNKLIMRWLSHRGGALDFHEWKEANPDKPFPVSVAIGADPATILAAVTPIPDTLSEYAFAGLLRGQKTEVTKSISNDLEIPASAEIVLEGYIDPNETALEGPYGDHTGYYNEQEYFPVFTVTHITMRRDAIYHSTYTGRPPDEPAVLGEALNEVFIPILQKQFPEIVDFYLPPEGCSYRLAVVTIKKQYAGHAKRVMMGVWSFLRQFMYTKFVIVCDDDVNARDWKDVIWAITTRCDPSRDTTLIDHTPIDYLDFASPIAGLGSKMGIDATNKWPGETSREWGTPIKKDPNVVKLVDEIWDQLGL.

Asn172 is a Mn(2+) binding site. Prenylated FMN contacts are provided by residues 175–177, 189–191, and 194–195; these read IYR, RWL, and RG. Glu238 contributes to the Mn(2+) binding site. Asp287 (proton donor) is an active-site residue.

The protein belongs to the UbiD family. In terms of assembly, homohexamer. The cofactor is prenylated FMN. It depends on Mn(2+) as a cofactor.

The protein resides in the cell membrane. It carries out the reaction a 4-hydroxy-3-(all-trans-polyprenyl)benzoate + H(+) = a 2-(all-trans-polyprenyl)phenol + CO2. Its pathway is cofactor biosynthesis; ubiquinone biosynthesis. In terms of biological role, catalyzes the decarboxylation of 3-octaprenyl-4-hydroxy benzoate to 2-octaprenylphenol, an intermediate step in ubiquinone biosynthesis. This is 3-octaprenyl-4-hydroxybenzoate carboxy-lyase from Actinobacillus pleuropneumoniae serotype 7 (strain AP76).